The following is a 132-amino-acid chain: Small ribosomal subunit protein uS8 (132 aa).

The protein belongs to the universal ribosomal protein uS8 family. As to quaternary structure, part of the 30S ribosomal subunit. Contacts proteins S5 and S12.

Its function is as follows. One of the primary rRNA binding proteins, it binds directly to 16S rRNA central domain where it helps coordinate assembly of the platform of the 30S subunit. In Rhodospirillum rubrum (strain ATCC 11170 / ATH 1.1.1 / DSM 467 / LMG 4362 / NCIMB 8255 / S1), this protein is Small ribosomal subunit protein uS8.